The following is a 314-amino-acid chain: Coiled-coil domain-containing protein 42 like-2 (314 aa).

Coiled-coil stretches lie at residues 34-139 and 175-233; these read RLLE…RQEK and NKLL…WESR.

It belongs to the CFAP73 family.

The sequence is that of Coiled-coil domain-containing protein 42 like-2 from Xenopus laevis (African clawed frog).